The sequence spans 480 residues: Sestrin-2 (480 aa).

N-acetylmethionine is present on Met-1. Residues 20–45 are disordered; sequence PGGVGDSGPGEEQRESRARRGPRGPS. Residues 66-239 are N-terminal domain; mediates the alkylhydroperoxide reductase activity; it reads GLEALMSSGR…APTPPSEQSS (174 aa). The active-site Cysteine sulfenic acid (-SOH) intermediate is the Cys-125. Residue Lys-175 forms a Glycyl lysine isopeptide (Lys-Gly) (interchain with G-Cter in ubiquitin) linkage. Disordered stretches follow at residues 222–252 and 272–291; these read ADGS…SGGF and LLRD…ELEK. Residue Ser-249 is modified to Phosphoserine. The segment at 308–480 is C-terminal domain; mediates TORC1 regulation; it reads PHPDMLCFVE…ALRAITRYMT (173 aa). Residues 374–377, Thr-386, and Glu-451 each bind L-leucine; that span reads TYNT.

Belongs to the sestrin family. In terms of assembly, interacts with the GATOR2 complex which is composed of MIOS, SEC13, SEH1L, WDR24 and WDR59; the interaction is negatively regulated by leucine. Conveys leucine availability via direct interaction with SEH1L and WDR24 components of the GATOR2 complex. Interacts with RRAGA, RRAGB, RRAGC and RRAGD; may function as a guanine nucleotide dissociation inhibitor for RRAGs and regulate them. May interact with the TORC2 complex. Interacts with KEAP1, RBX1, SQSTM and ULK1; to regulate the degradation of KEAP1. May also associate with the complex composed of TSC1, TSC2 and the AMP-responsive protein kinase/AMPK to regulate TORC1 signaling. May interact with PRDX1. Post-translationally, phosphorylated by ULK1 at multiple sites. In terms of processing, ubiquitinated at Lys-175 by RNF167 via 'Lys-63'-linked polyubiquitination in response to leucine deprivation: ubiquitination promotes SESN2-interaction with the GATOR2 complex, leading to inhibit the TORC1 signaling pathway. Deubiquitinated at Lys-175 by STAMBPL1, promoting the TORC1 signaling pathway. Ubiquitinated by RNF186; ubiquitination mediates proteasomal degradation. As to expression, widely expressed.

Its subcellular location is the cytoplasm. The enzyme catalyses a hydroperoxide + L-cysteinyl-[protein] = S-hydroxy-L-cysteinyl-[protein] + an alcohol. In terms of biological role, functions as an intracellular leucine sensor that negatively regulates the mTORC1 signaling pathway through the GATOR complex. In absence of leucine, binds the GATOR subcomplex GATOR2 and prevents mTORC1 signaling. Binding of leucine to SESN2 disrupts its interaction with GATOR2 thereby activating the TORC1 signaling pathway. This stress-inducible metabolic regulator also plays a role in protection against oxidative and genotoxic stresses. May negatively regulate protein translation in response to endoplasmic reticulum stress, via mTORC1. May positively regulate the transcription by NFE2L2 of genes involved in the response to oxidative stress by facilitating the SQSTM1-mediated autophagic degradation of KEAP1. May also mediate TP53 inhibition of TORC1 signaling upon genotoxic stress. Moreover, may prevent the accumulation of reactive oxygen species (ROS) through the alkylhydroperoxide reductase activity born by the N-terminal domain of the protein. Was originally reported to contribute to oxidative stress resistance by reducing PRDX1. However, this could not be confirmed. The chain is Sestrin-2 from Homo sapiens (Human).